A 279-amino-acid polypeptide reads, in one-letter code: Movement protein (279 aa).

The protein belongs to the cucumovirus movement protein family.

The protein resides in the host cell junction. It localises to the host plasmodesma. Transports viral genome to neighboring plant cells directly through plasmosdesmata, without any budding. The movement protein allows efficient cell to cell propagation, by bypassing the host cell wall barrier. Acts by forming a tubular structure at the host plasmodesmata, enlarging it enough to allow free passage of virion capsids. This is Movement protein from Cucumber mosaic virus (strain As) (CMV).